A 160-amino-acid chain; its full sequence is UPF0178 protein PSPA7_5991 (160 aa).

This sequence belongs to the UPF0178 family.

This Pseudomonas paraeruginosa (strain DSM 24068 / PA7) (Pseudomonas aeruginosa (strain PA7)) protein is UPF0178 protein PSPA7_5991.